The sequence spans 301 residues: Diaminopimelate epimerase (301 aa).

Substrate is bound by residues Asn15, Gln47, and Asn67. The active-site Proton donor is Cys76. Residues 77–78 (GN), Asn163, Asn197, and 215–216 (ER) contribute to the substrate site. Cys224 acts as the Proton acceptor in catalysis. 225–226 (GS) contributes to the substrate binding site.

Belongs to the diaminopimelate epimerase family. Homodimer.

It is found in the cytoplasm. The catalysed reaction is (2S,6S)-2,6-diaminopimelate = meso-2,6-diaminopimelate. The protein operates within amino-acid biosynthesis; L-lysine biosynthesis via DAP pathway; DL-2,6-diaminopimelate from LL-2,6-diaminopimelate: step 1/1. In terms of biological role, catalyzes the stereoinversion of LL-2,6-diaminopimelate (L,L-DAP) to meso-diaminopimelate (meso-DAP), a precursor of L-lysine and an essential component of the bacterial peptidoglycan. The chain is Diaminopimelate epimerase from Rhizobium meliloti (strain 1021) (Ensifer meliloti).